Here is a 550-residue protein sequence, read N- to C-terminus: Chaperonin GroEL (550 aa).

Residues Thr-30–Pro-33, Lys-51, Asp-87–Thr-91, Gly-415, and Asp-496 each bind ATP.

Belongs to the chaperonin (HSP60) family. As to quaternary structure, forms a cylinder of 14 subunits composed of two heptameric rings stacked back-to-back. Interacts with the co-chaperonin GroES.

It is found in the cytoplasm. It catalyses the reaction ATP + H2O + a folded polypeptide = ADP + phosphate + an unfolded polypeptide.. Together with its co-chaperonin GroES, plays an essential role in assisting protein folding. The GroEL-GroES system forms a nano-cage that allows encapsulation of the non-native substrate proteins and provides a physical environment optimized to promote and accelerate protein folding. This chain is Chaperonin GroEL, found in Rickettsia prowazekii (strain Madrid E).